A 390-amino-acid chain; its full sequence is Chorismate synthase (390 aa).

The NADP(+) site is built by R48 and R54. FMN-binding positions include 125–127 (RSS), 238–239 (NA), G278, 293–297 (KPTSS), and R319. Positions 360 to 390 (KVPGNIINPTNPVTTQPDVRRAEDPEPDENS) are disordered. Over residues 366 to 376 (INPTNPVTTQP) the composition is skewed to polar residues.

The protein belongs to the chorismate synthase family. Homotetramer. FMNH2 serves as cofactor.

It catalyses the reaction 5-O-(1-carboxyvinyl)-3-phosphoshikimate = chorismate + phosphate. Its pathway is metabolic intermediate biosynthesis; chorismate biosynthesis; chorismate from D-erythrose 4-phosphate and phosphoenolpyruvate: step 7/7. Functionally, catalyzes the anti-1,4-elimination of the C-3 phosphate and the C-6 proR hydrogen from 5-enolpyruvylshikimate-3-phosphate (EPSP) to yield chorismate, which is the branch point compound that serves as the starting substrate for the three terminal pathways of aromatic amino acid biosynthesis. This reaction introduces a second double bond into the aromatic ring system. In Nitrosomonas eutropha (strain DSM 101675 / C91 / Nm57), this protein is Chorismate synthase.